We begin with the raw amino-acid sequence, 368 residues long: Biotin synthase (368 aa).

The region spanning 46-277 (VHGDEVALCG…AAHIFVMGGR (232 aa)) is the Radical SAM core domain. [4Fe-4S] cluster is bound by residues C64, C68, and C71. Positions 109, 142, and 202 each coordinate [2Fe-2S] cluster. The disordered stretch occupies residues 347 to 368 (RAAEPGGKRGLPVVGPPRGGCA).

This sequence belongs to the radical SAM superfamily. Biotin synthase family. Homodimer. The cofactor is [4Fe-4S] cluster. It depends on [2Fe-2S] cluster as a cofactor.

The enzyme catalyses (4R,5S)-dethiobiotin + (sulfur carrier)-SH + 2 reduced [2Fe-2S]-[ferredoxin] + 2 S-adenosyl-L-methionine = (sulfur carrier)-H + biotin + 2 5'-deoxyadenosine + 2 L-methionine + 2 oxidized [2Fe-2S]-[ferredoxin]. The protein operates within cofactor biosynthesis; biotin biosynthesis; biotin from 7,8-diaminononanoate: step 2/2. Catalyzes the conversion of dethiobiotin (DTB) to biotin by the insertion of a sulfur atom into dethiobiotin via a radical-based mechanism. The polypeptide is Biotin synthase (Anaeromyxobacter sp. (strain Fw109-5)).